The following is a 444-amino-acid chain: Porin AaxA (444 aa).

A signal peptide spans 1–19; the sequence is MAFSRFYLLTALYTGGILA. A disordered region spans residues 42 to 68; the sequence is KNSTQDSDSSPSESSPHPRQEPRRHVL. Low complexity predominate over residues 46–56; that stretch reads QDSDSSPSESS.

Belongs to the OprB family.

Its subcellular location is the cell outer membrane. Facilitates L-arginine uptake, as part of the AaxABC system. The arginine uptake by the bacterium in the macrophage may be a virulence factor against the host innate immune response. This Chlamydia felis (strain Fe/C-56) (Chlamydophila felis) protein is Porin AaxA (aaxA).